A 287-amino-acid chain; its full sequence is MKRVFLLIATNLAILLVASIVMSILGVNTSTMGGLLVFAAIFGFGGSFISLAISKWMAKKTMGCEVIVQPRDETERWLVDTVTRQAKQAGINMPEVAIYQSPEMNAFATGPSKNNALVAVSTGLLYGMTRDEIEGVLAHEVSHVANGDMVTLTLIQGVVNTFVIFAARVVAGIIDNFVSSNDEEGQGLGMFAYMGVVFVLDMLFGILASIIVAYFSRIREFKADEGAARLAGKDKMIAALERLRAGPESGAMPAQMSAFGINGKRSMADFMMSHPPLEKRIAALKNS.

2 helical membrane-spanning segments follow: residues 4-24 (VFLL…VMSI) and 33-53 (GGLL…SLAI). H139 lines the Zn(2+) pocket. The active site involves E140. H143 is a binding site for Zn(2+). 2 consecutive transmembrane segments (helical) span residues 154–174 (LIQG…AGII) and 195–215 (GVVF…VAYF). Zn(2+) is bound at residue E220.

It belongs to the peptidase M48B family. It depends on Zn(2+) as a cofactor.

The protein localises to the cell inner membrane. The polypeptide is Protease HtpX (Shewanella denitrificans (strain OS217 / ATCC BAA-1090 / DSM 15013)).